The sequence spans 145 residues: uncharacterized protein (145 aa).

A CBM3 domain is found at 1 to 145; that stretch reads LQYRAADTNA…NGQIVWGTAP (145 aa).

This is an uncharacterized protein from Paenibacillus lautus (Bacillus lautus).